Consider the following 600-residue polypeptide: Aspartate--tRNA ligase (600 aa).

Glu175 contacts L-aspartate. Positions 199–202 (QLFK) are aspartate. Residue Arg221 coordinates L-aspartate. ATP is bound by residues 221–223 (RDE) and Gln230. His448 serves as a coordination point for L-aspartate. An ATP-binding site is contributed by Glu484. Arg491 provides a ligand contact to L-aspartate. 536–539 (GLDR) is an ATP binding site.

Belongs to the class-II aminoacyl-tRNA synthetase family. Type 1 subfamily. As to quaternary structure, homodimer.

Its subcellular location is the cytoplasm. The enzyme catalyses tRNA(Asp) + L-aspartate + ATP = L-aspartyl-tRNA(Asp) + AMP + diphosphate. In terms of biological role, catalyzes the attachment of L-aspartate to tRNA(Asp) in a two-step reaction: L-aspartate is first activated by ATP to form Asp-AMP and then transferred to the acceptor end of tRNA(Asp). This is Aspartate--tRNA ligase from Limosilactobacillus reuteri (strain DSM 20016) (Lactobacillus reuteri).